The following is a 98-amino-acid chain: Sm-like protein LSM8 (98 aa).

The Sm domain maps to 2 to 78; it reads AATTGLETLV…IGVIGELDEE (77 aa).

This sequence belongs to the snRNP Sm proteins family. In terms of assembly, component of the heptameric LSM2-LSM8 complex that forms a seven-membered ring structure with a donut shape. The LSM subunits are arranged in the order LSM8, LSM2, LSM3, LSM6, LSM5, LSM7 and LSM4. LSM8 subunit interacts only with its two neighboring subunits, LSM2 and LSM4. Interacts with the prefoldin co-chaperone subunits PFD1, PFD2, PFD3, PFD4, PFD5 and PFD6. Expressed in roots, leaves, stems, flowers and siliques.

The protein resides in the nucleus. Its function is as follows. Component of the nuclear LSM2-LSM8 complex which is involved splicing nuclear mRNAs. LSM2-LSM8 binds directly to the U6 small nuclear RNAs (snRNAs). LSM8 is essential for the formation of the nuclear LSM2-LSM8 complex involved in the accurate splicing of selected development-related mRNAs through the stabilization of the spliceosomal U6 snRNA. Plays a critical role in the regulation of development-related gene expression. The sequence is that of Sm-like protein LSM8 from Arabidopsis thaliana (Mouse-ear cress).